Reading from the N-terminus, the 2097-residue chain is SCAR-like protein 1 (2097 aa).

Disordered stretches follow at residues 205–227 (IANSESHTTSKDRSSRKVPPRTT), 544–565 (AHSSDKQSSQKSSGLDGSSIES), 1443–1467 (SQIASCSPTPSNEKIDELNAPPLSS), 1588–1616 (STEETYRLSSPVPPPNEPFSNVSYEDPQK), 1730–1802 (QERV…EKTV), 1820–1842 (ASSHVSENGCNQQSHGESLPVTS), and 1893–1944 (YEGP…EGGY). Residues 549 to 562 (KQSSQKSSGLDGSS) are compositionally biased toward low complexity. Positions 1443 to 1454 (SQIASCSPTPSN) are enriched in polar residues. Residues 1766-1794 (SISQQGLQGSVFPSDTSDNGEHSSYTSRA) show a composition bias toward polar residues. Residues 1908-1922 (YPHDDHNSEKEDIHQ) are compositionally biased toward basic and acidic residues. Residues 2028 to 2046 (ERNLLLEQIRNKTFNLKPV) enclose the WH2 domain.

This sequence belongs to the SCAR/WAVE family.

Its subcellular location is the cytoplasm. It localises to the cytoskeleton. Its function is as follows. Involved in regulation of actin and microtubule organization. Part of a WAVE complex that activates the Arp2/3 complex. In Oryza sativa subsp. japonica (Rice), this protein is SCAR-like protein 1.